The primary structure comprises 474 residues: tRNA-2-methylthio-N(6)-dimethylallyladenosine synthase (474 aa).

The MTTase N-terminal domain occupies 3 to 120 (KKLHIKTWGC…LPEMINSVRG (118 aa)). Residues C12, C49, C83, C157, C161, and C164 each contribute to the [4Fe-4S] cluster site. Residues 143–375 (RADGPTAFVS…QDRINQQTTA (233 aa)) form the Radical SAM core domain. The 64-residue stretch at 378–441 (RRKLGTVQRI…ANSLRGMLLR (64 aa)) folds into the TRAM domain.

The protein belongs to the methylthiotransferase family. MiaB subfamily. As to quaternary structure, monomer. [4Fe-4S] cluster serves as cofactor.

The protein localises to the cytoplasm. The enzyme catalyses N(6)-dimethylallyladenosine(37) in tRNA + (sulfur carrier)-SH + AH2 + 2 S-adenosyl-L-methionine = 2-methylsulfanyl-N(6)-dimethylallyladenosine(37) in tRNA + (sulfur carrier)-H + 5'-deoxyadenosine + L-methionine + A + S-adenosyl-L-homocysteine + 2 H(+). Its function is as follows. Catalyzes the methylthiolation of N6-(dimethylallyl)adenosine (i(6)A), leading to the formation of 2-methylthio-N6-(dimethylallyl)adenosine (ms(2)i(6)A) at position 37 in tRNAs that read codons beginning with uridine. The polypeptide is tRNA-2-methylthio-N(6)-dimethylallyladenosine synthase (Erwinia tasmaniensis (strain DSM 17950 / CFBP 7177 / CIP 109463 / NCPPB 4357 / Et1/99)).